A 475-amino-acid polypeptide reads, in one-letter code: BICD family-like cargo adapter 2 (475 aa).

Positions 56 to 275 form a coiled coil; sequence ELGKALLERN…LKELQDELHM (220 aa). 2 stretches are compositionally biased toward polar residues: residues 286–300 and 308–318; these read HSSL…TAVQ and SAETQSITSGY. Residues 286 to 318 form a disordered region; the sequence is HSSLHSEIQQSTAVQNHEKGRNSAETQSITSGY. Positions 340–413 form a coiled coil; sequence RLQDQVTMQH…ESLNLQLLST (74 aa). A compositionally biased stretch (low complexity) spans 440–450; it reads QSQKQQETQKP. Residues 440–459 form a disordered region; that stretch reads QSQKQQETQKPPESPQNSFL.

Belongs to the BICDR family.

The sequence is that of BICD family-like cargo adapter 2 (bicdl2) from Xenopus tropicalis (Western clawed frog).